Here is a 217-residue protein sequence, read N- to C-terminus: Meiotic expression up-regulated protein 29 (217 aa).

An N-terminal signal peptide occupies residues 1 to 21 (MFVVKTAVLLFFALFIGNTYA). The Extracellular segment spans residues 22 to 133 (YTYSLDRIQA…SGVLLHRPWK (112 aa)). Residue Asn-84 is glycosylated (N-linked (GlcNAc...) asparagine). Residues 134-154 (LFSLKPFTAAFVLLLAASYLA) traverse the membrane as a helical segment. Over 155-217 (TACFRMLGYL…VPVPVLDESV (63 aa)) the chain is Cytoplasmic.

The protein localises to the membrane. The sequence is that of Meiotic expression up-regulated protein 29 (meu29) from Schizosaccharomyces pombe (strain 972 / ATCC 24843) (Fission yeast).